The chain runs to 447 residues: Argininosuccinate synthase (447 aa).

ATP is bound by residues A20–S28 and A46. An L-citrulline-binding site is contributed by Y102. 2 residues coordinate ATP: G132 and T134. T134, N138, and D139 together coordinate L-aspartate. Position 138 (N138) interacts with L-citrulline. D139 is an ATP binding site. 2 residues coordinate L-citrulline: R142 and S195. Residue D197 coordinates ATP. Positions 204, 206, and 283 each coordinate L-citrulline.

It belongs to the argininosuccinate synthase family. Type 2 subfamily. As to quaternary structure, homotetramer.

It localises to the cytoplasm. It catalyses the reaction L-citrulline + L-aspartate + ATP = 2-(N(omega)-L-arginino)succinate + AMP + diphosphate + H(+). Its pathway is amino-acid biosynthesis; L-arginine biosynthesis; L-arginine from L-ornithine and carbamoyl phosphate: step 2/3. The protein is Argininosuccinate synthase of Neisseria gonorrhoeae (strain ATCC 700825 / FA 1090).